The primary structure comprises 308 residues: Ribosomal RNA small subunit methyltransferase H (308 aa).

S-adenosyl-L-methionine is bound by residues 33-35 (GGH), Asp-52, Phe-78, Asp-99, and Gln-106. Residues 289–308 (EEIETNSRSRSAKLRVAEKL) are disordered.

Belongs to the methyltransferase superfamily. RsmH family.

The protein localises to the cytoplasm. The enzyme catalyses cytidine(1402) in 16S rRNA + S-adenosyl-L-methionine = N(4)-methylcytidine(1402) in 16S rRNA + S-adenosyl-L-homocysteine + H(+). Specifically methylates the N4 position of cytidine in position 1402 (C1402) of 16S rRNA. This Thermoanaerobacter sp. (strain X514) protein is Ribosomal RNA small subunit methyltransferase H.